We begin with the raw amino-acid sequence, 89 residues long: Small ribosomal subunit protein uS15 (89 aa).

The protein belongs to the universal ribosomal protein uS15 family. In terms of assembly, part of the 30S ribosomal subunit. Forms a bridge to the 50S subunit in the 70S ribosome, contacting the 23S rRNA.

Functionally, one of the primary rRNA binding proteins, it binds directly to 16S rRNA where it helps nucleate assembly of the platform of the 30S subunit by binding and bridging several RNA helices of the 16S rRNA. Forms an intersubunit bridge (bridge B4) with the 23S rRNA of the 50S subunit in the ribosome. The chain is Small ribosomal subunit protein uS15 from Mycobacterium sp. (strain JLS).